An 85-amino-acid polypeptide reads, in one-letter code: ATP synthase subunit c (85 aa).

A run of 2 helical transmembrane segments spans residues Gly10 to Gly30 and Ala65 to Val85.

It belongs to the ATPase C chain family. In terms of assembly, F-type ATPases have 2 components, F(1) - the catalytic core - and F(0) - the membrane proton channel. F(1) has five subunits: alpha(3), beta(3), gamma(1), delta(1), epsilon(1). F(0) has three main subunits: a(1), b(2) and c(10-14). The alpha and beta chains form an alternating ring which encloses part of the gamma chain. F(1) is attached to F(0) by a central stalk formed by the gamma and epsilon chains, while a peripheral stalk is formed by the delta and b chains.

The protein localises to the cell inner membrane. Functionally, f(1)F(0) ATP synthase produces ATP from ADP in the presence of a proton or sodium gradient. F-type ATPases consist of two structural domains, F(1) containing the extramembraneous catalytic core and F(0) containing the membrane proton channel, linked together by a central stalk and a peripheral stalk. During catalysis, ATP synthesis in the catalytic domain of F(1) is coupled via a rotary mechanism of the central stalk subunits to proton translocation. Its function is as follows. Key component of the F(0) channel; it plays a direct role in translocation across the membrane. A homomeric c-ring of between 10-14 subunits forms the central stalk rotor element with the F(1) delta and epsilon subunits. This chain is ATP synthase subunit c, found in Thermotoga maritima (strain ATCC 43589 / DSM 3109 / JCM 10099 / NBRC 100826 / MSB8).